We begin with the raw amino-acid sequence, 689 residues long: Glycine--tRNA ligase beta subunit (689 aa).

It belongs to the class-II aminoacyl-tRNA synthetase family. In terms of assembly, tetramer of two alpha and two beta subunits.

It is found in the cytoplasm. The catalysed reaction is tRNA(Gly) + glycine + ATP = glycyl-tRNA(Gly) + AMP + diphosphate. In Escherichia coli O17:K52:H18 (strain UMN026 / ExPEC), this protein is Glycine--tRNA ligase beta subunit.